We begin with the raw amino-acid sequence, 221 residues long: Small ribosomal subunit protein uS3 (221 aa).

A KH type-2 domain is found at 39–107 (IRNYIKEKLY…TVILNIIEVK (69 aa)).

Belongs to the universal ribosomal protein uS3 family. As to quaternary structure, part of the 30S ribosomal subunit. Forms a tight complex with proteins S10 and S14.

In terms of biological role, binds the lower part of the 30S subunit head. Binds mRNA in the 70S ribosome, positioning it for translation. This is Small ribosomal subunit protein uS3 from Caldanaerobacter subterraneus subsp. tengcongensis (strain DSM 15242 / JCM 11007 / NBRC 100824 / MB4) (Thermoanaerobacter tengcongensis).